A 491-amino-acid chain; its full sequence is Ketol-acid reductoisomerase (NADP(+)) (491 aa).

The KARI N-terminal Rossmann domain occupies 17-208; the sequence is LGKCRFMSRD…GGHRAGVLES (192 aa). NADP(+) is bound by residues 45–48, Arg-68, Arg-76, Ser-78, and 108–110; these read CGAQ and DKQ. Residue His-132 is part of the active site. Gly-158 is an NADP(+) binding site. 2 KARI C-terminal knotted domains span residues 209-344 and 345-484; these read SFVA…NYPE and YEGK…MTDM. Residues Asp-217, Glu-221, Glu-389, and Glu-393 each coordinate Mg(2+). Ser-414 contacts substrate.

Belongs to the ketol-acid reductoisomerase family. The cofactor is Mg(2+).

It carries out the reaction (2R)-2,3-dihydroxy-3-methylbutanoate + NADP(+) = (2S)-2-acetolactate + NADPH + H(+). It catalyses the reaction (2R,3R)-2,3-dihydroxy-3-methylpentanoate + NADP(+) = (S)-2-ethyl-2-hydroxy-3-oxobutanoate + NADPH + H(+). Its pathway is amino-acid biosynthesis; L-isoleucine biosynthesis; L-isoleucine from 2-oxobutanoate: step 2/4. It participates in amino-acid biosynthesis; L-valine biosynthesis; L-valine from pyruvate: step 2/4. Functionally, involved in the biosynthesis of branched-chain amino acids (BCAA). Catalyzes an alkyl-migration followed by a ketol-acid reduction of (S)-2-acetolactate (S2AL) to yield (R)-2,3-dihydroxy-isovalerate. In the isomerase reaction, S2AL is rearranged via a Mg-dependent methyl migration to produce 3-hydroxy-3-methyl-2-ketobutyrate (HMKB). In the reductase reaction, this 2-ketoacid undergoes a metal-dependent reduction by NADPH to yield (R)-2,3-dihydroxy-isovalerate. The protein is Ketol-acid reductoisomerase (NADP(+)) of Proteus mirabilis (strain HI4320).